A 244-amino-acid chain; its full sequence is Ferredoxin--NADP reductase B (244 aa).

Residues 4–106 enclose the FAD-binding FR-type domain; it reads AEPFEARLVA…VGPHGLFTRD (103 aa). Residues 55–58 and Thr-120 each bind FAD; that span reads RAYS.

Belongs to the ferredoxin--NADP reductase type 1 family. The cofactor is FAD.

It carries out the reaction 2 reduced [4Fe-4S]-[ferredoxin] + NADP(+) + H(+) = 2 oxidized [4Fe-4S]-[ferredoxin] + NADPH. Transports electrons between NADPH and ferredoxin. Can transfer electrons to ferredoxins Fdx2 and Fdx8. Prefers NADPH to NADH. The protein is Ferredoxin--NADP reductase B of Sorangium cellulosum (strain So ce56) (Polyangium cellulosum (strain So ce56)).